The sequence spans 224 residues: Ribulose-phosphate 3-epimerase (224 aa).

Residue serine 8 participates in substrate binding. Positions 31, 33, and 64 each coordinate a divalent metal cation. Residue aspartate 33 is the Proton acceptor of the active site. Substrate contacts are provided by residues histidine 64, 140–143, 173–175, and 195–196; these read GFGG, DGG, and GS. Position 173 (aspartate 173) interacts with a divalent metal cation. The active-site Proton donor is the aspartate 173.

This sequence belongs to the ribulose-phosphate 3-epimerase family. It depends on a divalent metal cation as a cofactor.

The catalysed reaction is D-ribulose 5-phosphate = D-xylulose 5-phosphate. It functions in the pathway carbohydrate degradation. In terms of biological role, catalyzes the reversible epimerization of D-ribulose 5-phosphate to D-xylulose 5-phosphate. This is Ribulose-phosphate 3-epimerase from Mycobacterium leprae (strain TN).